The chain runs to 73 residues: Crustacean hyperglycemic hormone (73 aa).

3 cysteine pairs are disulfide-bonded: C7-C43, C23-C39, and C26-C52. The residue at position 73 (V73) is a Valine amide.

Belongs to the arthropod CHH/MIH/GIH/VIH hormone family. Produced by the medulla terminalis X-organ in the eyestalks and transported to the sinus gland where they are stored and released.

The protein resides in the secreted. In terms of biological role, hormone found in the sinus gland of isopods and decapods which controls the blood sugar level. Has a secretagogue action over the amylase released from the midgut gland. May act as a stress hormone and may be involved in the control of molting and reproduction. In Jasus lalandii (Cape rock lobster), this protein is Crustacean hyperglycemic hormone.